The chain runs to 106 residues: MAEIRKGDTVKVIAGKEKGKSGRVLEVLREDGRVRVEKLMTVKRHQKKGRSQANPEGGILEMAGTIAISSVMVVGKDEKPVRREKIGRELGAKEKARLQKRKAAAK.

Residues 84-97 show a composition bias toward basic and acidic residues; that stretch reads EKIGRELGAKEKAR. The tract at residues 84-106 is disordered; it reads EKIGRELGAKEKARLQKRKAAAK.

It belongs to the universal ribosomal protein uL24 family. As to quaternary structure, part of the 50S ribosomal subunit.

Its function is as follows. One of two assembly initiator proteins, it binds directly to the 5'-end of the 23S rRNA, where it nucleates assembly of the 50S subunit. Functionally, one of the proteins that surrounds the polypeptide exit tunnel on the outside of the subunit. In Anaeromyxobacter sp. (strain K), this protein is Large ribosomal subunit protein uL24.